A 305-amino-acid chain; its full sequence is tRNA pseudouridine synthase B (305 aa).

Aspartate 41 (nucleophile) is an active-site residue.

The protein belongs to the pseudouridine synthase TruB family. Type 1 subfamily.

The enzyme catalyses uridine(55) in tRNA = pseudouridine(55) in tRNA. Responsible for synthesis of pseudouridine from uracil-55 in the psi GC loop of transfer RNAs. The protein is tRNA pseudouridine synthase B of Prochlorococcus marinus subsp. pastoris (strain CCMP1986 / NIES-2087 / MED4).